The sequence spans 172 residues: Probable tryptophan transport protein (172 aa).

4 helical membrane passes run 7 to 29, 49 to 71, 104 to 126, and 136 to 158; these read VIMA…FLGG, VQNV…AFPA, AVLT…LLIV, and FAAV…YPIV.

This sequence belongs to the vitamin uptake transporter (VUT/ECF) (TC 2.A.88) family. TrpP subfamily.

The protein localises to the cell membrane. Its function is as follows. Probably involved in tryptophan uptake. The polypeptide is Probable tryptophan transport protein (trpP) (Bacillus subtilis (strain 168)).